The chain runs to 440 residues: Enolase (440 aa).

2 residues coordinate substrate: His159 and Glu168. Glu211 acts as the Proton donor in catalysis. Residues Asp245, Glu296, and Asp321 each contribute to the Mg(2+) site. Residues Glu296 and Asp321 each contribute to the substrate site. Lys346 functions as the Proton acceptor in the catalytic mechanism. Substrate-binding positions include 373-376 and Lys397; that span reads SHRS.

This sequence belongs to the enolase family. As to quaternary structure, homodimer. The cofactor is Mg(2+).

It localises to the cytoplasm. The catalysed reaction is (2R)-2-phosphoglycerate = phosphoenolpyruvate + H2O. It participates in carbohydrate degradation; glycolysis; pyruvate from D-glyceraldehyde 3-phosphate: step 4/5. This Tuber borchii (White truffle) protein is Enolase (eno-1).